The following is a 38-amino-acid chain: Histone H5 (38 aa).

Residues 1-15 are compositionally biased toward pro residues; that stretch reads TESPIPVPAPAPAAK. A disordered region spans residues 1-38; sequence TESPIPVPAPAPAAKPKPKRVSKRPASHPPYSDMIAAA. Over residues 16-26 the composition is skewed to basic residues; sequence PKPKRVSKRPA.

The protein belongs to the histone H1/H5 family. Erythroid cells.

The protein resides in the nucleus. Its subcellular location is the chromosome. Its function is as follows. Histone H5 performs the same function as H1, being necessary for the condensation of nucleosome chains into higher order structures, and replaces histone H1 in certain cells. The sequence is that of Histone H5 from Columba livia (Rock dove).